Reading from the N-terminus, the 121-residue chain is Histone H2B.6 (121 aa).

A disordered region spans residues Met1–Lys28. Lys7 and Lys13 each carry N6-acetyllysine.

Belongs to the histone H2B family. The nucleosome is a histone octamer containing two molecules each of H2A, H2B, H3 and H4 assembled in one H3-H4 heterotetramer and two H2A-H2B heterodimers. The octamer wraps approximately 147 bp of DNA. Post-translationally, can be acetylated to form H2BK6ac and H2BK33ac. As to expression, expressed preferentially in meristematic tissues.

It localises to the nucleus. It is found in the chromosome. Core component of nucleosome. Nucleosomes wrap and compact DNA into chromatin, limiting DNA accessibility to the cellular machineries which require DNA as a template. Histones thereby play a central role in transcription regulation, DNA repair, DNA replication and chromosomal stability. DNA accessibility is regulated via a complex set of post-translational modifications of histones, also called histone code, and nucleosome remodeling. The sequence is that of Histone H2B.6 (TH123) from Triticum aestivum (Wheat).